Consider the following 405-residue polypeptide: Deoxyguanosinetriphosphate triphosphohydrolase-like protein (405 aa).

In terms of domain architecture, HD spans 75-219; the sequence is RLTHTIEVAQ…AAIADDIAYN (145 aa).

The protein belongs to the dGTPase family. Type 2 subfamily.

The polypeptide is Deoxyguanosinetriphosphate triphosphohydrolase-like protein (Sinorhizobium medicae (strain WSM419) (Ensifer medicae)).